The sequence spans 78 residues: Delta-conotoxin-like CVIE (78 aa).

The first 22 residues, 1–22 (MKLTCMMIVAVLFLTAWTFVTA), serve as a signal peptide directing secretion. Residues 23–49 (DDSRNGLKNLFPKARHEMKNPEASKLN) constitute a propeptide that is removed on maturation. 3 disulfide bridges follow: C54/C69, C61/C73, and C68/C77. Position 65 is a 4-hydroxyproline (P65).

This sequence belongs to the conotoxin O1 superfamily. In terms of tissue distribution, expressed by the venom duct.

It is found in the secreted. In terms of biological role, delta-conotoxins bind to site 6 of voltage-gated sodium channels (Nav) and inhibit the inactivation process. The protein is Delta-conotoxin-like CVIE of Conus catus (Cat cone).